The primary structure comprises 246 residues: MIIPAFDLINGRTVRLYQGDYSNQKNYNVNLFNSLEVYKSKGIEIVHLVDLDGAKNSANRQIELLKKIVSHTTVPVQVGGGIRTTKDISTLLDLGVKRVVIGSSIVSNKKQVKQWLNFYGPDAIVLALDVHVDSSNKKEISIDGWQKKTNFILEEIIEYFLSSGLKHVLCTDISRDGTLLGPNFKLYKEICSNFKNINFQASGGVASLQDIIFLKKTGVKSIIIGRSLLEKKFTIEEAVKCWQRES.

The active-site Proton acceptor is the aspartate 7. Aspartate 129 (proton donor) is an active-site residue.

It belongs to the HisA/HisF family.

Its subcellular location is the cytoplasm. It carries out the reaction 1-(5-phospho-beta-D-ribosyl)-5-[(5-phospho-beta-D-ribosylamino)methylideneamino]imidazole-4-carboxamide = 5-[(5-phospho-1-deoxy-D-ribulos-1-ylimino)methylamino]-1-(5-phospho-beta-D-ribosyl)imidazole-4-carboxamide. Its pathway is amino-acid biosynthesis; L-histidine biosynthesis; L-histidine from 5-phospho-alpha-D-ribose 1-diphosphate: step 4/9. The polypeptide is 1-(5-phosphoribosyl)-5-[(5-phosphoribosylamino)methylideneamino] imidazole-4-carboxamide isomerase (Buchnera aphidicola subsp. Acyrthosiphon pisum (strain Tuc7)).